Here is a 166-residue protein sequence, read N- to C-terminus: Phosphopantetheine adenylyltransferase (166 aa).

Position 10 (S10) interacts with substrate. ATP is bound by residues 10-11 (SF) and H18. Residues K42, A79, and R93 each contribute to the substrate site. Residues 94–96 (GLR), E104, and 129–135 (VRPITAT) contribute to the ATP site.

The protein belongs to the bacterial CoaD family. Homohexamer. Mg(2+) is required as a cofactor.

It is found in the cytoplasm. It carries out the reaction (R)-4'-phosphopantetheine + ATP + H(+) = 3'-dephospho-CoA + diphosphate. Its pathway is cofactor biosynthesis; coenzyme A biosynthesis; CoA from (R)-pantothenate: step 4/5. Functionally, reversibly transfers an adenylyl group from ATP to 4'-phosphopantetheine, yielding dephospho-CoA (dPCoA) and pyrophosphate. This chain is Phosphopantetheine adenylyltransferase, found in Methylobacterium nodulans (strain LMG 21967 / CNCM I-2342 / ORS 2060).